The sequence spans 513 residues: Light-independent protochlorophyllide reductase subunit B (513 aa).

Aspartate 36 is a binding site for [4Fe-4S] cluster. Catalysis depends on aspartate 299, which acts as the Proton donor. Residue 434-435 (GM) participates in substrate binding.

It belongs to the ChlB/BchB/BchZ family. As to quaternary structure, protochlorophyllide reductase is composed of three subunits; ChlL, ChlN and ChlB. Forms a heterotetramer of two ChlB and two ChlN subunits. [4Fe-4S] cluster serves as cofactor.

The protein localises to the plastid. The protein resides in the chloroplast. It carries out the reaction chlorophyllide a + oxidized 2[4Fe-4S]-[ferredoxin] + 2 ADP + 2 phosphate = protochlorophyllide a + reduced 2[4Fe-4S]-[ferredoxin] + 2 ATP + 2 H2O. It functions in the pathway porphyrin-containing compound metabolism; chlorophyll biosynthesis (light-independent). In terms of biological role, component of the dark-operative protochlorophyllide reductase (DPOR) that uses Mg-ATP and reduced ferredoxin to reduce ring D of protochlorophyllide (Pchlide) to form chlorophyllide a (Chlide). This reaction is light-independent. The NB-protein (ChlN-ChlB) is the catalytic component of the complex. The chain is Light-independent protochlorophyllide reductase subunit B from Chaetosphaeridium globosum (Charophycean green alga).